Reading from the N-terminus, the 374-residue chain is Chaperone protein DnaJ (374 aa).

A J domain is found at 5 to 70 (DFYEILGVGK…QKRDAYDRYG (66 aa)). The tract at residues 29–50 (AMKHHPDRNPDSKGAEDKFKEA) is disordered. A compositionally biased stretch (basic and acidic residues) spans 35 to 50 (DRNPDSKGAEDKFKEA). The segment at 134-212 (GYDTTIRVPS…CSGAGKIKRN (79 aa)) adopts a CR-type zinc-finger fold. Zn(2+) is bound by residues C147, C150, C164, C167, C186, C189, C200, and C203. 4 CXXCXGXG motif repeats span residues 147–154 (CETCDGSG), 164–171 (CTTCGGHG), 186–193 (CPKCHGSG), and 200–207 (CGTCSGAG).

It belongs to the DnaJ family. Homodimer. Zn(2+) is required as a cofactor.

The protein localises to the cytoplasm. Functionally, participates actively in the response to hyperosmotic and heat shock by preventing the aggregation of stress-denatured proteins and by disaggregating proteins, also in an autonomous, DnaK-independent fashion. Unfolded proteins bind initially to DnaJ; upon interaction with the DnaJ-bound protein, DnaK hydrolyzes its bound ATP, resulting in the formation of a stable complex. GrpE releases ADP from DnaK; ATP binding to DnaK triggers the release of the substrate protein, thus completing the reaction cycle. Several rounds of ATP-dependent interactions between DnaJ, DnaK and GrpE are required for fully efficient folding. Also involved, together with DnaK and GrpE, in the DNA replication of plasmids through activation of initiation proteins. The polypeptide is Chaperone protein DnaJ (Janthinobacterium sp. (strain Marseille) (Minibacterium massiliensis)).